The chain runs to 174 residues: Protein RESTRICTED TEV MOVEMENT 1 (174 aa).

The region spanning Met1–Pro152 is the Jacalin-type lectin domain.

This sequence belongs to the jacalin lectin family. As to quaternary structure, self-interacts. Interacts with RTM3. As to expression, expressed at low levels exclusively in phloem-associated cells (e.g. sieve elements and adjacent cells).

The protein localises to the cytoplasm. Required for the restriction of long-distance movement of the pathogenic tobacco etch virus (TEV) without causing a hypersensitive response or inducing systemic acquired resistance. The polypeptide is Protein RESTRICTED TEV MOVEMENT 1 (RTM1) (Arabidopsis thaliana (Mouse-ear cress)).